Here is a 579-residue protein sequence, read N- to C-terminus: Folliculin (579 aa).

The disordered stretch occupies residues 32–82 (GAGSGDGAGRGEPADEEEGGIQMSSRIRAHSPAEGASAESSSPGPKKSDMC). A phosphoserine mark is found at Ser-62 and Ser-73. Positions 63-76 (PAEGASAESSSPGP) are enriched in low complexity. The 157-residue stretch at 86-242 (RSLAAGHPGY…RNGNAARSLT (157 aa)) folds into the uDENN FLCN/SMCR8-type domain. A coiled-coil region spans residues 285–309 (QMEQLAELEEESESWDNSEAEEEEK). Positions 294 to 308 (EESESWDNSEAEEEE) are enriched in acidic residues. Positions 294–321 (EESESWDNSEAEEEEKGPALPEGAEGRE) are disordered. A phosphoserine mark is found at Ser-302, Ser-406, Ser-537, Ser-542, and Ser-571. One can recognise a cDENN FLCN/SMCR8-type domain in the interval 339–491 (QPRKLSVFKS…ILNKMEAALT (153 aa)). Positions 493–558 (QNLSVDVVDQ…LLKFWMTGLS (66 aa)) constitute a dDENN FLCN/SMCR8-type domain.

It belongs to the folliculin family. In terms of assembly, interacts (via C-terminus) with FNIP1 or FNIP2 (via C-terminus). Component of the lysosomal folliculin complex (LFC), composed of FLCN, FNIP1 (or FNIP2), RagA/RRAGA or RagB/RRAGB GDP-bound, RagC/RRAGC or RagD/RRAGD GTP-bound, and Ragulator. Interaction with FNIP1 or FNIP2 mediates indirect interaction with the PRKAA1, PRKAB1 and PRKAG1 subunits of 5'-AMP-activated protein kinase (AMPK). Interacts with HSP90AA1 in the presence of FNIP1. Interacts with HSP70, STUB1, CDC37, AHSA1, CCT2, STIP1, PTGES3 and PPP5C. Interacts with GABARAP; interaction takes place in the presence of FNIP1 and/or FNIP2. Interacts with RILP; the interaction is direct and promotes association between RILP and RAB34. Interacts with KIF3A and KIF3B. Interacts with lactate dehydrogenase LDHA, but not LDHB; the interaction is direct, may preferentially bind LDHA dimers rather than tetramers, and regulates LDHA activity, acting as an uncompetitive inhibitor. Post-translationally, phosphorylation by ULK1 modulates the interaction with GABARAP and is required to regulate autophagy.

It localises to the lysosome membrane. Its subcellular location is the cytoplasm. It is found in the cytosol. The protein localises to the cell projection. The protein resides in the cilium. It localises to the cytoskeleton. Its subcellular location is the microtubule organizing center. It is found in the centrosome. The protein localises to the spindle. The protein resides in the nucleus. GTPase-activating activity is inhibited in the folliculin complex (LFC), which stabilizes the GDP-bound state of RagA/RRAGA (or RagB/RRAGB), because Arg-164 is located far from the RagC/RRAGC or RagD/RRAGD nucleotide pocket. Disassembly of the LFC complex upon amino acid restimulation liberates the GTPase-activating activity. Its function is as follows. Multi-functional protein, involved in both the cellular response to amino acid availability and in the regulation of glycolysis. GTPase-activating protein that plays a key role in the cellular response to amino acid availability through regulation of the non-canonical mTORC1 signaling cascade controlling the MiT/TFE factors TFEB and TFE3. Activates mTORC1 by acting as a GTPase-activating protein: specifically stimulates GTP hydrolysis by RagC/RRAGC or RagD/RRAGD, promoting the conversion to the GDP-bound state of RagC/RRAGC or RagD/RRAGD, and thereby activating the kinase activity of mTORC1. The GTPase-activating activity is inhibited during starvation and activated in presence of nutrients. Acts as a key component for non-canonical mTORC1-dependent control of the MiT/TFE factors TFEB and TFE3, while it is not involved in mTORC1-dependent phosphorylation of canonical RPS6KB1/S6K1 and EIF4EBP1/4E-BP1. In low-amino acid conditions, the lysosomal folliculin complex (LFC) is formed on the membrane of lysosomes, which inhibits the GTPase-activating activity of FLCN, inactivates mTORC1 and maximizes nuclear translocation of TFEB and TFE3. Upon amino acid restimulation, RagA/RRAGA (or RagB/RRAGB) nucleotide exchange promotes disassembly of the LFC complex and liberates the GTPase-activating activity of FLCN, leading to activation of mTORC1 and subsequent cytoplasmic retention of TFEB and TFE3. Indirectly acts as a positive regulator of Wnt signaling by promoting mTOR-dependent cytoplasmic retention of MiT/TFE factor TFE3. Required for the exit of hematopoietic stem cell from pluripotency by promoting mTOR-dependent cytoplasmic retention of TFE3, thereby increasing Wnt signaling. Involved in the control of embryonic stem cells differentiation; together with LAMTOR1 it is necessary to recruit and activate RagC/RRAGC and RagD/RRAGD at the lysosomes, and to induce exit of embryonic stem cells from pluripotency via non-canonical, mTOR-independent TFE3 inactivation. Acts as an inhibitor of browning of adipose tissue by regulating mTOR-dependent cytoplasmic retention of TFE3. In response to flow stress, regulates STK11/LKB1 accumulation and mTORC1 activation through primary cilia: may act by recruiting STK11/LKB1 to primary cilia for activation of AMPK resided at basal bodies, causing mTORC1 down-regulation. Together with FNIP1 and/or FNIP2, regulates autophagy: following phosphorylation by ULK1, interacts with GABARAP and promotes autophagy. Required for starvation-induced perinuclear clustering of lysosomes by promoting association of RILP with its effector RAB34. Regulates glycolysis by binding to lactate dehydrogenase LDHA, acting as an uncompetitive inhibitor. The polypeptide is Folliculin (Bos taurus (Bovine)).